A 434-amino-acid chain; its full sequence is Chaperone SurA (434 aa).

An N-terminal signal peptide occupies residues 1 to 22 (MKPSKHLIFALFALAISQPTMA). PpiC domains follow at residues 173-274 (DVEY…KIMD) and 283-383 (IEEV…QLEE).

It localises to the periplasm. It catalyses the reaction [protein]-peptidylproline (omega=180) = [protein]-peptidylproline (omega=0). Its function is as follows. Chaperone involved in the correct folding and assembly of outer membrane proteins. Recognizes specific patterns of aromatic residues and the orientation of their side chains, which are found more frequently in integral outer membrane proteins. May act in both early periplasmic and late outer membrane-associated steps of protein maturation. The polypeptide is Chaperone SurA (Shewanella sp. (strain MR-7)).